We begin with the raw amino-acid sequence, 362 residues long: MERIVVTLGERSYPITIASGLFNEPASFLPLKSGEQVMLVTSETLAPLYLDKVRGVLEQAGVNVDSVILPDGEQYKSLAVLDTVFTALLQKPHGRDTTLVALGGGVVGDLTGFAAASYQRGVRFIQVPTTLLSQVDSSVGGKTAVNHPLGKNMIGAFYQPASVVVDLDCLKTLPPRELASGLAEVIKYGIILDGAFFNWLEENLDALLRLDGPAMAYCIRRCCELKAEVVVADERETGLRALLNLGHTFGHAIEAEMGYGNWLHGEAVAAGMVMAARTSERLGQFSSAETQRIITLLTRAGLPVNGPREMSAQAYLPHMLRDKKVLAGEIRLILPLAIGKSEVRSGVSHELVLNAIADCQSA.

NAD(+) contacts are provided by residues 71-76 (DGEQYK), 105-109 (GVVGD), 129-130 (TT), K142, K151, and 169-172 (CLKT). Zn(2+)-binding residues include E184, H247, and H264.

It belongs to the sugar phosphate cyclases superfamily. Dehydroquinate synthase family. Requires Co(2+) as cofactor. The cofactor is Zn(2+). NAD(+) serves as cofactor.

It localises to the cytoplasm. It carries out the reaction 7-phospho-2-dehydro-3-deoxy-D-arabino-heptonate = 3-dehydroquinate + phosphate. The protein operates within metabolic intermediate biosynthesis; chorismate biosynthesis; chorismate from D-erythrose 4-phosphate and phosphoenolpyruvate: step 2/7. Functionally, catalyzes the conversion of 3-deoxy-D-arabino-heptulosonate 7-phosphate (DAHP) to dehydroquinate (DHQ). This Shigella flexneri serotype 5b (strain 8401) protein is 3-dehydroquinate synthase.